The sequence spans 326 residues: Probable cell division protein WhiA (326 aa).

Residues 275–308 (SLDELGHYADPPMTKDAVAGRIRRLLAMADKRAS) constitute a DNA-binding region (H-T-H motif).

The protein belongs to the WhiA family.

Its function is as follows. Involved in cell division and chromosome segregation. The chain is Probable cell division protein WhiA from Leifsonia xyli subsp. xyli (strain CTCB07).